The following is a 459-amino-acid chain: Probable 3-ketoacyl-CoA synthase 14 (459 aa).

The first 25 residues, 1–25, serve as a signal peptide directing secretion; sequence MFIAMADFKLLLLILILLSLFELDL. Residues 32–52 traverse the membrane as a helical segment; that stretch reads FFSPFPVKIGLLLISIFFYAY. The 283-residue stretch at 52-334 folds into the FAE domain; the sequence is YSTTRSKPVY…FILFLVKSKL (283 aa). Catalysis depends on residues histidine 268, histidine 352, histidine 356, histidine 385, and asparagine 389.

The protein belongs to the thiolase-like superfamily. Chalcone/stilbene synthases family. In terms of tissue distribution, expressed in siliques.

The protein resides in the membrane. The catalysed reaction is a very-long-chain acyl-CoA + malonyl-CoA + H(+) = a very-long-chain 3-oxoacyl-CoA + CO2 + CoA. The protein operates within lipid metabolism; fatty acid biosynthesis. The protein is Probable 3-ketoacyl-CoA synthase 14 of Arabidopsis thaliana (Mouse-ear cress).